We begin with the raw amino-acid sequence, 417 residues long: Dibenzothiophene monooxygenase (417 aa).

The helical N-terminus stretch occupies residues 18–124; that stretch reads NDPVAVARGL…HLYTQIAQNN (107 aa). FMN is bound by residues tyrosine 96, 129–134, 159–163, arginine 282, 369–370, and histidine 391; these read NASSEN, KHFCS, and AR. The segment at 125 to 233 is central beta-barrel N-terminus; sequence WWTGNASSEN…KVEPDEVLGA (109 aa). The lid loop stretch occupies residues 131–142; the sequence is SSENNSHVLDWK. The helical C-terminus stretch occupies residues 234-417; sequence PNAFVLAFIQ…GQYPIPGFTS (184 aa).

Belongs to the DszC flavin monooxygenase family. Homotetramer formed by a dimer of dimers; FMN binds between monomers of the homodimer.

The protein resides in the cytoplasm. It carries out the reaction dibenzothiophene + 2 FMNH2 + 2 O2 = dibenzothiophene 5,5-dioxide + 2 FMN + 2 H2O + 2 H(+). It catalyses the reaction dibenzothiophene + FMNH2 + O2 = dibenzothiophene 5-oxide + FMN + H2O + H(+). The catalysed reaction is dibenzothiophene 5-oxide + FMNH2 + O2 = dibenzothiophene 5,5-dioxide + FMN + H2O + H(+). The protein operates within sulfur metabolism; dibenzothiophene degradation. DBT degradation completely inhibited by Cu(2+), Mn(2+), p-chloromercuribenzoic acid, 2,2-bipyridyl, 1,10-phenanthroline, and strongly inhibited by Zn(2+), 5,5'- Dithiobis(2-nitrobenzoic acid) and 8-quinolinol. Functionally, catalyzes the first step of the '4S' desulfurization pathway that removes covalently bound sulfur from dibenzothiophene (DBT) without breaking carbon-carbon bonds. Sulfur dioxygenase which converts DBT to DBT-sulfone (DBTO2 or DBT 5,5-dioxide) in a stepwise manner. Also acts on thioxanthen-9-one and 4,6-dimethyl DBT and 2,8-dimethyl DBT. The chain is Dibenzothiophene monooxygenase from Rhodococcus erythropolis (Arthrobacter picolinophilus).